A 127-amino-acid polypeptide reads, in one-letter code: MARIAGVDLPRDKRVEIALTYLYGIGLSRSKEILANTGVNPDTRVKDLSDEDALALRSYIEANYQIEGDLRRWETMNIKRLVDIGTYRGRRHRQGLPVRGQRTRTNARTRRGRRLTVAGKKKAPSKK.

Residues 92-127 form a disordered region; it reads HRQGLPVRGQRTRTNARTRRGRRLTVAGKKKAPSKK. Over residues 101–127 the composition is skewed to basic residues; that stretch reads QRTRTNARTRRGRRLTVAGKKKAPSKK.

It belongs to the universal ribosomal protein uS13 family. Part of the 30S ribosomal subunit. Forms a loose heterodimer with protein S19. Forms two bridges to the 50S subunit in the 70S ribosome.

Functionally, located at the top of the head of the 30S subunit, it contacts several helices of the 16S rRNA. In the 70S ribosome it contacts the 23S rRNA (bridge B1a) and protein L5 of the 50S subunit (bridge B1b), connecting the 2 subunits; these bridges are implicated in subunit movement. Contacts the tRNAs in the A and P-sites. This Gloeothece citriformis (strain PCC 7424) (Cyanothece sp. (strain PCC 7424)) protein is Small ribosomal subunit protein uS13.